The primary structure comprises 216 residues: Thiamine-phosphate synthase (216 aa).

4-amino-2-methyl-5-(diphosphooxymethyl)pyrimidine contacts are provided by residues 40-44 (QLRIK) and Asn72. 2 residues coordinate Mg(2+): Asp73 and Asp92. Ser111 serves as a coordination point for 4-amino-2-methyl-5-(diphosphooxymethyl)pyrimidine. Position 137-139 (137-139 (TTT)) interacts with 2-[(2R,5Z)-2-carboxy-4-methylthiazol-5(2H)-ylidene]ethyl phosphate. Residue Lys140 coordinates 4-amino-2-methyl-5-(diphosphooxymethyl)pyrimidine. 2-[(2R,5Z)-2-carboxy-4-methylthiazol-5(2H)-ylidene]ethyl phosphate-binding positions include Gly169 and 189–190 (VS).

Belongs to the thiamine-phosphate synthase family. Requires Mg(2+) as cofactor.

It catalyses the reaction 2-[(2R,5Z)-2-carboxy-4-methylthiazol-5(2H)-ylidene]ethyl phosphate + 4-amino-2-methyl-5-(diphosphooxymethyl)pyrimidine + 2 H(+) = thiamine phosphate + CO2 + diphosphate. It carries out the reaction 2-(2-carboxy-4-methylthiazol-5-yl)ethyl phosphate + 4-amino-2-methyl-5-(diphosphooxymethyl)pyrimidine + 2 H(+) = thiamine phosphate + CO2 + diphosphate. The catalysed reaction is 4-methyl-5-(2-phosphooxyethyl)-thiazole + 4-amino-2-methyl-5-(diphosphooxymethyl)pyrimidine + H(+) = thiamine phosphate + diphosphate. The protein operates within cofactor biosynthesis; thiamine diphosphate biosynthesis; thiamine phosphate from 4-amino-2-methyl-5-diphosphomethylpyrimidine and 4-methyl-5-(2-phosphoethyl)-thiazole: step 1/1. Functionally, condenses 4-methyl-5-(beta-hydroxyethyl)thiazole monophosphate (THZ-P) and 2-methyl-4-amino-5-hydroxymethyl pyrimidine pyrophosphate (HMP-PP) to form thiamine monophosphate (TMP). In Photorhabdus laumondii subsp. laumondii (strain DSM 15139 / CIP 105565 / TT01) (Photorhabdus luminescens subsp. laumondii), this protein is Thiamine-phosphate synthase.